Consider the following 377-residue polypeptide: Tubulin--tyrosine ligase (377 aa).

The TTL domain occupies 3–370 (TFVVRDENSS…PPDVEQPQTQ (368 aa)).

This sequence belongs to the tubulin--tyrosine ligase family. Monomer. It depends on Mg(2+) as a cofactor. Requires K(+) as cofactor.

The enzyme catalyses C-terminal L-alpha-aminoacyl-L-glutamyl-L-glutamyl-[tubulin] + L-tyrosine + ATP = C-terminal L-alpha-aminoacyl-L-glutamyl-L-glutamyl-L-tyrosyl-[tubulin] + ADP + phosphate + H(+). Catalyzes the post-translational addition of a tyrosine to the C-terminal end of detyrosinated alpha-tubulin. The sequence is that of Tubulin--tyrosine ligase (TTL) from Homo sapiens (Human).